A 521-amino-acid chain; its full sequence is Lysine--tRNA ligase (521 aa).

Residues proline 32–asparagine 40 carry the 'HIGH' region motif. The 'KMSKS' region signature appears at lysine 280 to serine 284.

This sequence belongs to the class-I aminoacyl-tRNA synthetase family.

The protein localises to the cytoplasm. It catalyses the reaction tRNA(Lys) + L-lysine + ATP = L-lysyl-tRNA(Lys) + AMP + diphosphate. The polypeptide is Lysine--tRNA ligase (Borrelia garinii subsp. bavariensis (strain ATCC BAA-2496 / DSM 23469 / PBi) (Borreliella bavariensis)).